Reading from the N-terminus, the 119-residue chain is UPF0102 protein SGR_1878 (119 aa).

Belongs to the UPF0102 family.

The polypeptide is UPF0102 protein SGR_1878 (Streptomyces griseus subsp. griseus (strain JCM 4626 / CBS 651.72 / NBRC 13350 / KCC S-0626 / ISP 5235)).